We begin with the raw amino-acid sequence, 93 residues long: Phosphoribosyl-ATP pyrophosphatase (93 aa).

The protein belongs to the PRA-PH family.

It is found in the cytoplasm. The enzyme catalyses 1-(5-phospho-beta-D-ribosyl)-ATP + H2O = 1-(5-phospho-beta-D-ribosyl)-5'-AMP + diphosphate + H(+). Its pathway is amino-acid biosynthesis; L-histidine biosynthesis; L-histidine from 5-phospho-alpha-D-ribose 1-diphosphate: step 2/9. The chain is Phosphoribosyl-ATP pyrophosphatase from Mycolicibacterium gilvum (strain PYR-GCK) (Mycobacterium gilvum (strain PYR-GCK)).